A 378-amino-acid chain; its full sequence is Quinolinate synthase (378 aa).

H59 and S80 together coordinate iminosuccinate. Residue C125 participates in [4Fe-4S] cluster binding. Iminosuccinate is bound by residues 151–153 (YAN) and S168. Position 212 (C212) interacts with [4Fe-4S] cluster. Residues 238-240 (HPE) and T255 each bind iminosuccinate. Position 309 (C309) interacts with [4Fe-4S] cluster.

It belongs to the quinolinate synthase family. Type 1 subfamily. [4Fe-4S] cluster is required as a cofactor.

The protein localises to the cytoplasm. The catalysed reaction is iminosuccinate + dihydroxyacetone phosphate = quinolinate + phosphate + 2 H2O + H(+). It functions in the pathway cofactor biosynthesis; NAD(+) biosynthesis; quinolinate from iminoaspartate: step 1/1. Catalyzes the condensation of iminoaspartate with dihydroxyacetone phosphate to form quinolinate. The protein is Quinolinate synthase of Burkholderia orbicola (strain MC0-3).